A 93-amino-acid chain; its full sequence is Small ribosomal subunit protein uS19 (93 aa).

Belongs to the universal ribosomal protein uS19 family.

Functionally, protein S19 forms a complex with S13 that binds strongly to the 16S ribosomal RNA. This Leifsonia xyli subsp. xyli (strain CTCB07) protein is Small ribosomal subunit protein uS19.